A 504-amino-acid chain; its full sequence is Cytochrome P450 4A2 (504 aa).

Residues 1 to 4 (MGFS) constitute a propeptide that is removed on maturation. E315 serves as a coordination point for heme. S434 is modified (phosphoserine). C451 provides a ligand contact to heme.

Belongs to the cytochrome P450 family. Heme serves as cofactor.

It is found in the endoplasmic reticulum membrane. The protein localises to the microsome membrane. The enzyme catalyses an omega-methyl-long-chain fatty acid + reduced [NADPH--hemoprotein reductase] + O2 = an omega-hydroxy-long-chain fatty acid + oxidized [NADPH--hemoprotein reductase] + H2O + H(+). It catalyses the reaction dodecanoate + reduced [NADPH--hemoprotein reductase] + O2 = (11R)-hydroxydodecanoate + oxidized [NADPH--hemoprotein reductase] + H2O + H(+). The catalysed reaction is dodecanoate + reduced [NADPH--hemoprotein reductase] + O2 = 12-hydroxydodecanoate + oxidized [NADPH--hemoprotein reductase] + H2O + H(+). It carries out the reaction tetradecanoate + reduced [NADPH--hemoprotein reductase] + O2 = 14-hydroxytetradecanoate + oxidized [NADPH--hemoprotein reductase] + H2O + H(+). The enzyme catalyses hexadecanoate + reduced [NADPH--hemoprotein reductase] + O2 = 16-hydroxyhexadecanoate + oxidized [NADPH--hemoprotein reductase] + H2O + H(+). It participates in lipid metabolism; fatty acid metabolism. A cytochrome P450 monooxygenase that catalyzes omega and omega-1 hydroxylation of saturated fatty acids. Exhibits preferential omega versus omega-1 regioselectivity and (R) versus (S) stereoselectivity for hydroxylation of lauric and myristic acids. Has low activity toward palmitic acid. Mechanistically, uses molecular oxygen inserting one oxygen atom into a substrate, and reducing the second into a water molecule, with two electrons provided by NADPH via cytochrome P450 reductase (CPR; NADPH-ferrihemoprotein reductase). The chain is Cytochrome P450 4A2 from Rattus norvegicus (Rat).